We begin with the raw amino-acid sequence, 682 residues long: uncharacterized protein (682 aa).

One can recognise an MCM domain in the interval 284–487 (VVNILADRLI…KDKDIAEYIV (204 aa)). 329-336 (TDPGIGKT) provides a ligand contact to ATP.

The protein belongs to the MCM family.

This is an uncharacterized protein from Methanocaldococcus jannaschii (strain ATCC 43067 / DSM 2661 / JAL-1 / JCM 10045 / NBRC 100440) (Methanococcus jannaschii).